Here is an 88-residue protein sequence, read N- to C-terminus: Small ribosomal subunit protein bS20 (88 aa).

Residues Met-1–Arg-25 are disordered. Over residues Arg-12–Lys-22 the composition is skewed to basic and acidic residues.

Belongs to the bacterial ribosomal protein bS20 family.

Binds directly to 16S ribosomal RNA. The chain is Small ribosomal subunit protein bS20 from Dinoroseobacter shibae (strain DSM 16493 / NCIMB 14021 / DFL 12).